We begin with the raw amino-acid sequence, 63 residues long: Large ribosomal subunit protein bL35 (63 aa).

Positions 1–43 are enriched in basic residues; it reads MKMRTHSGAKKRLKVLSSGKVKKKSTRMRHLNSHMSSKTKRQL. The tract at residues 1-45 is disordered; it reads MKMRTHSGAKKRLKVLSSGKVKKKSTRMRHLNSHMSSKTKRQLGK.

Belongs to the bacterial ribosomal protein bL35 family.

This chain is Large ribosomal subunit protein bL35, found in Bdellovibrio bacteriovorus (strain ATCC 15356 / DSM 50701 / NCIMB 9529 / HD100).